Consider the following 161-residue polypeptide: Transcriptional repressor NrdR (161 aa).

A compositionally biased stretch (polar residues) spans Met1–Thr11. A disordered region spans residues Met1 to Glu20. The segment at Cys3–Cys34 is a zinc-finger region. In terms of domain architecture, ATP-cone spans Leu49 to Asp139.

Belongs to the NrdR family. Requires Zn(2+) as cofactor.

Functionally, negatively regulates transcription of bacterial ribonucleotide reductase nrd genes and operons by binding to NrdR-boxes. The polypeptide is Transcriptional repressor NrdR (Rhodopseudomonas palustris (strain BisB18)).